We begin with the raw amino-acid sequence, 98 residues long: UPF0235 protein MJ0618 (98 aa).

The protein belongs to the UPF0235 family.

The protein is UPF0235 protein MJ0618 of Methanocaldococcus jannaschii (strain ATCC 43067 / DSM 2661 / JAL-1 / JCM 10045 / NBRC 100440) (Methanococcus jannaschii).